A 173-amino-acid chain; its full sequence is Large ribosomal subunit protein uL5 (173 aa).

The protein belongs to the universal ribosomal protein uL5 family. In terms of assembly, part of the 50S ribosomal subunit; contacts the 5S rRNA and probably tRNA. Forms a bridge to the 30S subunit in the 70S ribosome.

This is one of the proteins that bind and probably mediate the attachment of the 5S RNA into the large ribosomal subunit, where it forms part of the central protuberance. In the 70S ribosome it contacts protein S13 of the 30S subunit (bridge B1b), connecting the 2 subunits; this bridge is implicated in subunit movement. May contact the P site tRNA; the 5S rRNA and some of its associated proteins might help stabilize positioning of ribosome-bound tRNAs. This is Large ribosomal subunit protein uL5 from Nitrosopumilus maritimus (strain SCM1).